The sequence spans 384 residues: 2-isopropylmalate synthase 2 (384 aa).

The region spanning 9–260 (VYIVDTTLRD…DLGIDTSRFR (252 aa)) is the Pyruvate carboxyltransferase domain. Positions 18, 198, 200, and 234 each coordinate Mn(2+).

Belongs to the alpha-IPM synthase/homocitrate synthase family. LeuA type 1 subfamily. Homodimer. Mn(2+) is required as a cofactor.

It is found in the cytoplasm. It catalyses the reaction 3-methyl-2-oxobutanoate + acetyl-CoA + H2O = (2S)-2-isopropylmalate + CoA + H(+). It participates in amino-acid biosynthesis; L-leucine biosynthesis; L-leucine from 3-methyl-2-oxobutanoate: step 1/4. Catalyzes the condensation of the acetyl group of acetyl-CoA with 3-methyl-2-oxobutanoate (2-ketoisovalerate) to form 3-carboxy-3-hydroxy-4-methylpentanoate (2-isopropylmalate). This is 2-isopropylmalate synthase 2 from Caldanaerobacter subterraneus subsp. tengcongensis (strain DSM 15242 / JCM 11007 / NBRC 100824 / MB4) (Thermoanaerobacter tengcongensis).